The primary structure comprises 944 residues: Translation initiation factor IF-2 (944 aa).

2 disordered regions span residues 50–91 (SAKT…FAGK) and 114–349 (KVEV…VPAT). Composition is skewed to basic and acidic residues over residues 75 to 86 (ESAKKNKEDHPR), 124 to 157 (VVTE…ETKD), 164 to 185 (AEVK…EKKK), and 199 to 233 (KRAE…DNRR). The segment covering 267–280 (SSGSAPATDSFTPA) has biased composition (polar residues). Positions 286–307 (SRRDRDRKKSDNNRDNTKDGNR) are enriched in basic and acidic residues. 2 stretches are compositionally biased toward polar residues: residues 317-331 (NRNQ…NWNQ) and 338-348 (YQNNQSSSVPA). Positions 443 to 614 (ERPAVVTIMG…LLVAEVQELK (172 aa)) constitute a tr-type G domain. A G1 region spans residues 452–459 (GHVDHGKT). 452–459 (GHVDHGKT) serves as a coordination point for GTP. The tract at residues 477 to 481 (GITQH) is G2. A G3 region spans residues 498–501 (DTPG). GTP contacts are provided by residues 498–502 (DTPGH) and 552–555 (NKID). Residues 552 to 555 (NKID) form a G4 region. Residues 590 to 592 (SAK) are G5.

Belongs to the TRAFAC class translation factor GTPase superfamily. Classic translation factor GTPase family. IF-2 subfamily.

The protein resides in the cytoplasm. One of the essential components for the initiation of protein synthesis. Protects formylmethionyl-tRNA from spontaneous hydrolysis and promotes its binding to the 30S ribosomal subunits. Also involved in the hydrolysis of GTP during the formation of the 70S ribosomal complex. The protein is Translation initiation factor IF-2 (infB) of Lactococcus lactis subsp. lactis (strain IL1403) (Streptococcus lactis).